We begin with the raw amino-acid sequence, 936 residues long: DNA topoisomerase 1 (936 aa).

The Toprim domain maps to 15–139; it reads RRLVIVESPT…VKRMVFHEIT (125 aa). Mg(2+) contacts are provided by Glu-21 and Asp-108. Residues 154–611 form the Topo IA-type catalytic domain; sequence DIALVDAQET…FYFGGEHGVE (458 aa). An interaction with DNA region spans residues 188–193; that stretch reads SAGRVQ. The active-site O-(5'-phospho-DNA)-tyrosine intermediate is the Tyr-339. Disordered regions lie at residues 661–688, 732–767, 841–884, and 903–936; these read LERM…LTPD, VLPE…SLFR, KRRG…ETNA, and LLAD…AKKA. Over residues 910 to 936 the composition is skewed to basic residues; sequence RGPVKKKAPAKKAAKKAPAKKAAAKKA.

It belongs to the type IA topoisomerase family. As to quaternary structure, monomer. The cofactor is Mg(2+).

The catalysed reaction is ATP-independent breakage of single-stranded DNA, followed by passage and rejoining.. In terms of biological role, releases the supercoiling and torsional tension of DNA, which is introduced during the DNA replication and transcription, by transiently cleaving and rejoining one strand of the DNA duplex. Introduces a single-strand break via transesterification at a target site in duplex DNA. The scissile phosphodiester is attacked by the catalytic tyrosine of the enzyme, resulting in the formation of a DNA-(5'-phosphotyrosyl)-enzyme intermediate and the expulsion of a 3'-OH DNA strand. The free DNA strand then undergoes passage around the unbroken strand, thus removing DNA supercoils. Finally, in the religation step, the DNA 3'-OH attacks the covalent intermediate to expel the active-site tyrosine and restore the DNA phosphodiester backbone. Relaxes negatively (but not positively) supercoiled DNA, concatanates and knots circular ssDNA at 52 but not 37 degrees Celsius. Preferentially nicks supercoiled DNA at C(G/T)CTT, cutting between the TT residues, binds ss and dsDNA with the recognition site. The polypeptide is DNA topoisomerase 1 (Mycolicibacterium smegmatis (strain ATCC 700084 / mc(2)155) (Mycobacterium smegmatis)).